A 342-amino-acid chain; its full sequence is MLEQQFAAEIQHIIDNKTKPLGALGQLEQVALQLALIQSQGKEQAATHIELKQPQMLLFAGDHGVADEGVSIAPSAVTQQMVLNFLAGGAAINCFCALHSIDLTVVDCGILLPVDSDAPNLILRRLGSRTANFAFESAMTIEQVEQALRNGQQIAAEKIAQGADLLMFGEMGIANTSSAAALLSALSGHEVDHCVGRGTGINEEQLSHKIKVVAQGVGRCEGLSVNAILAEVGGFEIVTMAGAFIAAAEHKTPVLVDGFIVSVAAYIATLLKPEVRDYLLFAHRSEEQGHQIVLSLLEAKPLLDLGLRLGEGTGAALAYPLLKAAAQFYNNMASFESAGVTV.

Glutamate 311 acts as the Proton acceptor in catalysis.

Belongs to the CobT family.

It carries out the reaction 5,6-dimethylbenzimidazole + nicotinate beta-D-ribonucleotide = alpha-ribazole 5'-phosphate + nicotinate + H(+). It functions in the pathway nucleoside biosynthesis; alpha-ribazole biosynthesis; alpha-ribazole from 5,6-dimethylbenzimidazole: step 1/2. In terms of biological role, catalyzes the synthesis of alpha-ribazole-5'-phosphate from nicotinate mononucleotide (NAMN) and 5,6-dimethylbenzimidazole (DMB). The polypeptide is Nicotinate-nucleotide--dimethylbenzimidazole phosphoribosyltransferase (Vibrio vulnificus (strain CMCP6)).